A 233-amino-acid polypeptide reads, in one-letter code: Ion-translocating oxidoreductase complex subunit E (233 aa).

6 helical membrane-spanning segments follow: residues 18-38 (ALVQ…ATNA), 39-59 (LGLG…VSAL), 69-89 (IPIY…LINA), 92-112 (FGLY…CIVI), 128-148 (ALDG…LGAL), and 182-202 (PFLL…LLAG).

It belongs to the NqrDE/RnfAE family. In terms of assembly, the complex is composed of six subunits: RnfA, RnfB, RnfC, RnfD, RnfE and RnfG.

The protein localises to the cell inner membrane. Its function is as follows. Part of a membrane-bound complex that couples electron transfer with translocation of ions across the membrane. The polypeptide is Ion-translocating oxidoreductase complex subunit E (Yersinia pseudotuberculosis serotype IB (strain PB1/+)).